Here is a 149-residue protein sequence, read N- to C-terminus: Nucleoside diphosphate kinase (149 aa).

ATP-binding residues include Lys-9, Phe-57, Arg-85, Thr-91, Arg-102, and Asn-112. The active-site Pros-phosphohistidine intermediate is His-115.

It belongs to the NDK family. As to quaternary structure, homotetramer. It depends on Mg(2+) as a cofactor.

The protein localises to the cytoplasm. It catalyses the reaction dZDP + ATP = dZTP + ADP. The catalysed reaction is a 2'-deoxyribonucleoside 5'-diphosphate + ATP = a 2'-deoxyribonucleoside 5'-triphosphate + ADP. It carries out the reaction a ribonucleoside 5'-diphosphate + ATP = a ribonucleoside 5'-triphosphate + ADP. It participates in purine metabolism. Functionally, major role in the synthesis of nucleoside triphosphates other than ATP. The ATP gamma phosphate is transferred to the NDP beta phosphate via a ping-pong mechanism, using a phosphorylated active-site intermediate. In terms of biological role, (Microbial infection) Catalyzes the phosphorylation of dZDP to dZTP, when the bacterium is infected by a phage that produces the substrate for the synthesis of dZTP (2- amino-2'-deoxyadenosine 5'-triphosphate), which is then used by the phage as a DNA polymerase substrate. The chain is Nucleoside diphosphate kinase from Synechococcus elongatus (strain ATCC 33912 / PCC 7942 / FACHB-805) (Anacystis nidulans R2).